Reading from the N-terminus, the 271-residue chain is Aliphatic sulfonates import ATP-binding protein SsuB (271 aa).

Residues 13 to 234 (ITLESIGKRY…RKGSAKLAAL (222 aa)) enclose the ABC transporter domain. ATP is bound at residue 45–52 (GRSGCGKS). The tract at residues 250–271 (EASRQGIKASRQGTATSRRVAN) is disordered. Residues 260-271 (RQGTATSRRVAN) show a composition bias toward polar residues.

It belongs to the ABC transporter superfamily. Aliphatic sulfonates importer (TC 3.A.1.17.2) family. In terms of assembly, the complex is composed of two ATP-binding proteins (SsuB), two transmembrane proteins (SsuC) and a solute-binding protein (SsuA).

The protein localises to the cell inner membrane. The enzyme catalyses ATP + H2O + aliphatic sulfonate-[sulfonate-binding protein]Side 1 = ADP + phosphate + aliphatic sulfonateSide 2 + [sulfonate-binding protein]Side 1.. Its function is as follows. Part of the ABC transporter complex SsuABC involved in aliphatic sulfonates import. Responsible for energy coupling to the transport system. In Yersinia pestis bv. Antiqua (strain Antiqua), this protein is Aliphatic sulfonates import ATP-binding protein SsuB.